A 411-amino-acid polypeptide reads, in one-letter code: Lysosome-associated membrane glycoprotein 3 (411 aa).

Positions 1–21 are cleaved as a signal peptide; that stretch reads MPGQISAVAVLFLSLTVILHG. Residues 22 to 376 lie on the Lumenal side of the membrane; the sequence is YQIREKEFPK…NVNECLSDYT (355 aa). Polar residues predominate over residues 172–192; it reads HKSTTNQRPTLSTNVLGTSTP. The segment at 172-204 is disordered; it reads HKSTTNQRPTLSTNVLGTSTPTHKDRSTTSPVP. N-linked (GlcNAc...) asparagine glycosylation occurs at Asn227. 2 disulfides stabilise this stretch: Cys232–Cys269 and Cys334–Cys371. The chain crosses the membrane as a helical span at residues 377-397; that stretch reads VVLPMVAIIVVVICVVGLSVY. Topologically, residues 398 to 411 are cytoplasmic; the sequence is KIRQRHQSSAYQRI.

The protein belongs to the LAMP family. In terms of assembly, monomer. Interacts with FURIN.

The protein localises to the cell surface. It localises to the lysosome membrane. Its subcellular location is the cytoplasmic vesicle membrane. The protein resides in the early endosome membrane. Lysosomal membrane glycoprotein which plays a role in the unfolded protein response (UPR) that contributes to protein degradation and cell survival during proteasomal dysfunction. Plays a role in the process of fusion of the lysosome with the autophagosome, thereby modulating the autophagic process. Promotes hepatocellular lipogenesis through activation of the PI3K/Akt pathway. May also play a role in dendritic cell function and in adaptive immunity. The polypeptide is Lysosome-associated membrane glycoprotein 3 (Lamp3) (Mus musculus (Mouse)).